The following is a 1480-amino-acid chain: C-type mannose receptor 2 (1480 aa).

The first 30 residues, 1–30 (MGPIRPALAPWPRHLLRCVLLLGGLRLGHP), serve as a signal peptide directing secretion. Residues 31–1413 (ADSAAALLEP…SAALPENPVA (1383 aa)) lie on the Extracellular side of the membrane. The Ricin B-type lectin domain occupies 40–166 (PDVFLIFSQG…WNIYGSEEDL (127 aa)). Intrachain disulfides connect Cys-53–Cys-67 and Cys-92–Cys-111. Residues Asn-101 and Asn-139 are each glycosylated (N-linked (GlcNAc...) asparagine). A Fibronectin type-II domain is found at 181-229 (SHGKPCTIPFKYDNQWFHGCTSTGREDGHLWCATTQDYGKDERWGFCPI). Intrachain disulfides connect Cys-186-Cys-212, Cys-200-Cys-227, Cys-265-Cys-358, and Cys-334-Cys-350. Residues 243–359 (LTDSCYQFNF…CSIALPYVCK (117 aa)) enclose the C-type lectin 1 domain. The N-linked (GlcNAc...) asparagine glycan is linked to Asn-363. C-type lectin domains lie at 388–504 (FQGH…SICK), 527–643 (HSPS…RYIC), 677–808 (KLRH…WICK), 831–950 (FQEA…YICK), 978–1106 (FLNK…GFIC), 1131–1242 (YLNR…GAVC), and 1271–1391 (FREH…GVVC). Intrachain disulfides connect Cys-409–Cys-503, Cys-480–Cys-495, Cys-617–Cys-634, Cys-703–Cys-807, Cys-784–Cys-799, Cys-852–Cys-949, and Cys-926–Cys-941. Residue Asn-1028 is glycosylated (N-linked (GlcNAc...) asparagine). Cysteines 1077 and 1097 form a disulfide. Lys-1141 is covalently cross-linked (Glycyl lysine isopeptide (Lys-Gly) (interchain with G-Cter in SUMO1)). Cys-1219 and Cys-1233 are oxidised to a cystine. Asn-1348 carries an N-linked (GlcNAc...) asparagine glycan. A disulfide bridge connects residues Cys-1367 and Cys-1382. A helical membrane pass occupies residues 1414–1434 (LVVVLTAAVLLLLALLTGALI). Residues 1435–1480 (LYRRRQSAERGSFEGARYSRSSRSGPAEATEKNILVSDMEMNEQQE) are Cytoplasmic-facing. The disordered stretch occupies residues 1446–1480 (SFEGARYSRSSRSGPAEATEKNILVSDMEMNEQQE).

In terms of assembly, interacts directly with PLAUR/UPAR and PLAU/pro-UPA to form a tri-molecular complex. Interacts with collagen V. Interacts with C-terminal region of type I collagen/COL1A1. N-glycosylated. In terms of processing, phosphorylated.

It is found in the cell membrane. In terms of biological role, may play a role as endocytotic lectin receptor displaying calcium-dependent lectin activity. Internalizes glycosylated ligands from the extracellular space for release in an endosomal compartment via clathrin-mediated endocytosis. May be involved in plasminogen activation system controlling the extracellular level of PLAUR/PLAU, and thus may regulate protease activity at the cell surface. May contribute to cellular uptake, remodeling and degradation of extracellular collagen matrices. May participate in remodeling of extracellular matrix cooperating with the matrix metalloproteinases (MMPs) secreted by hepatic stellate cells. May mediate endocytosis of partially degraded collagens and glycoproteins produced in the extracellular matrix by MMPs. This Rattus norvegicus (Rat) protein is C-type mannose receptor 2 (Mrc2).